The sequence spans 96 residues: Co-chaperonin GroES (96 aa).

This sequence belongs to the GroES chaperonin family. Heptamer of 7 subunits arranged in a ring. Interacts with the chaperonin GroEL.

It localises to the cytoplasm. Its function is as follows. Together with the chaperonin GroEL, plays an essential role in assisting protein folding. The GroEL-GroES system forms a nano-cage that allows encapsulation of the non-native substrate proteins and provides a physical environment optimized to promote and accelerate protein folding. GroES binds to the apical surface of the GroEL ring, thereby capping the opening of the GroEL channel. The sequence is that of Co-chaperonin GroES from Leptothrix cholodnii (strain ATCC 51168 / LMG 8142 / SP-6) (Leptothrix discophora (strain SP-6)).